Reading from the N-terminus, the 716-residue chain is Ubiquitin thioesterase zranb1-B (716 aa).

RanBP2-type zinc fingers lie at residues 3-33 and 82-111; these read DLGLKWSCEYCTYENWPSAIKCTMCRAQRHN and TSSKWSCHMCTYLNWPRAIRCTQCLSQRQQ. Zn(2+)-binding residues include Cys-10, Cys-13, Cys-24, Cys-27, Cys-88, Cys-91, Cys-102, and Cys-105. A disordered region spans residues 113 to 143; it reads SQQHSPLSPSETPQTSGSRPSPVTSDPCEEY. The span at 118–136 shows a compositional bias: polar residues; sequence PLSPSETPQTSGSRPSPVT. The segment at 152–181 adopts a RanBP2-type 3 zinc-finger fold; it reads HAQRWPCSACTYENWPKSLRCVVCDHPKPS. The Zn(2+) site is built by Cys-158, Cys-161, Cys-172, and Cys-175. The disordered stretch occupies residues 178–228; that stretch reads PKPSGSPETPQQDSEAESATSPSIVNEQERENVRTAGGGGGGSRGRLRKLS. Residues 183–203 show a composition bias toward polar residues; it reads SPETPQQDSEAESATSPSIVN. 2 ANK repeats span residues 268-298 and 321-348; these read RRSDWLFLNACAGVVEGDLAAVEAYKSSGGD and FTLVHLAIRFQRQDMLAVLLTEVSQQTA. An OTU domain is found at 440–600; that stretch reads LYALWNRTAG…RGHFSALVAM (161 aa). The active-site Nucleophile is the Cys-451. Residue His-593 is the Proton acceptor of the active site.

It belongs to the peptidase C64 family.

Its subcellular location is the cytoplasm. The protein resides in the nucleus. It carries out the reaction Thiol-dependent hydrolysis of ester, thioester, amide, peptide and isopeptide bonds formed by the C-terminal Gly of ubiquitin (a 76-residue protein attached to proteins as an intracellular targeting signal).. Its function is as follows. Ubiquitin thioesterase, which specifically hydrolyzes 'Lys-29'-linked and 'Lys-33'-linked diubiquitin. Also cleaves 'Lys-63'-linked chains, but with 40-fold less efficiency compared to 'Lys-29'-linked ones. Positive regulator of the Wnt signaling pathway that deubiquitinates apc protein, a negative regulator of Wnt-mediated transcription. Acts as a regulator of autophagy by mediating deubiquitination of pik3c3/vps34, thereby promoting autophagosome maturation. Plays a role in the regulation of cell morphology and cytoskeletal organization. Required in the stress fiber dynamics and cell migration. The sequence is that of Ubiquitin thioesterase zranb1-B (zranb1b) from Danio rerio (Zebrafish).